The following is a 329-amino-acid chain: Cytosolic arginine sensor for mTORC1 subunit 2 (329 aa).

ACT domains follow at residues 72–139 (ADAT…MHTL) and 262–322 (ELWK…NALQ).

The protein belongs to the GATS family. In terms of assembly, may form homodimers and heterodimers.

It localises to the cytoplasm. It is found in the cytosol. Its function is as follows. Functions as a negative regulator of the TORC1 signaling pathway. The polypeptide is Cytosolic arginine sensor for mTORC1 subunit 2 (Xenopus laevis (African clawed frog)).